Consider the following 367-residue polypeptide: Phosphoribosylaminoimidazole-succinocarboxamide synthase (367 aa).

It belongs to the SAICAR synthetase family.

The catalysed reaction is 5-amino-1-(5-phospho-D-ribosyl)imidazole-4-carboxylate + L-aspartate + ATP = (2S)-2-[5-amino-1-(5-phospho-beta-D-ribosyl)imidazole-4-carboxamido]succinate + ADP + phosphate + 2 H(+). The protein operates within purine metabolism; IMP biosynthesis via de novo pathway; 5-amino-1-(5-phospho-D-ribosyl)imidazole-4-carboxamide from 5-amino-1-(5-phospho-D-ribosyl)imidazole-4-carboxylate: step 1/2. The chain is Phosphoribosylaminoimidazole-succinocarboxamide synthase from Shewanella piezotolerans (strain WP3 / JCM 13877).